The chain runs to 440 residues: NADH-quinone oxidoreductase subunit D 1 (440 aa).

Belongs to the complex I 49 kDa subunit family. As to quaternary structure, NDH-1 is composed of 14 different subunits. Subunits NuoB, C, D, E, F, and G constitute the peripheral sector of the complex.

Its subcellular location is the cell membrane. The catalysed reaction is a quinone + NADH + 5 H(+)(in) = a quinol + NAD(+) + 4 H(+)(out). Its function is as follows. NDH-1 shuttles electrons from NADH, via FMN and iron-sulfur (Fe-S) centers, to quinones in the respiratory chain. The immediate electron acceptor for the enzyme in this species is believed to be a menaquinone. Couples the redox reaction to proton translocation (for every two electrons transferred, four hydrogen ions are translocated across the cytoplasmic membrane), and thus conserves the redox energy in a proton gradient. The sequence is that of NADH-quinone oxidoreductase subunit D 1 from Streptomyces griseus subsp. griseus (strain JCM 4626 / CBS 651.72 / NBRC 13350 / KCC S-0626 / ISP 5235).